The primary structure comprises 408 residues: Repulsive guidance molecule B homolog drag-1 (408 aa).

A signal peptide spans 1–22 (MSIVYLVSITFIFSVFKPITSC). Over 23–387 (RVEECAAWFQ…SEIFKKCIPS (365 aa)) the chain is Extracellular. N-linked (GlcNAc...) asparagine glycosylation is found at Asn-60, Asn-134, Asn-183, and Asn-376. The chain crosses the membrane as a helical span at residues 388 to 408 (KSIRFYPFLAIFFFALLSLLC).

It belongs to the repulsive guidance molecule (RGM) family. As to quaternary structure, interacts with unc-40 (via FN6 domain), dbl-1 and sma-6. In terms of tissue distribution, expressed in pharyngeal, hypodermal and intestinal cells.

The protein resides in the cell membrane. Functionally, probably in association with the cell surface receptor unc-40, positively modulates the BMP-like Sma/Mab signaling pathway through interaction with both the ligand dbl-1 and its type I receptor sma-6. Regulates body size and this may be through modulation of the Sma/Mab signaling pathway. The polypeptide is Repulsive guidance molecule B homolog drag-1 (Caenorhabditis elegans).